A 317-amino-acid polypeptide reads, in one-letter code: Universal stress protein Mb2019 (317 aa).

Residues G13, 128-134, 142-143, G175, D208, 277-283, and 291-293 each bind ATP; these read GYRGQGA, SV, GSHGRGG, and SVS.

It belongs to the universal stress protein A family.

This chain is Universal stress protein Mb2019, found in Mycobacterium bovis (strain ATCC BAA-935 / AF2122/97).